A 256-amino-acid chain; its full sequence is Small ribosomal subunit protein eS1A (256 aa).

An N-acetylalanine; partial modification is found at A2.

The protein belongs to the eukaryotic ribosomal protein eS1 family. As to quaternary structure, component of the small ribosomal subunit. Mature ribosomes consist of a small (40S) and a large (60S) subunit. The 40S subunit contains about 33 different proteins and 1 molecule of RNA (18S). The 60S subunit contains about 49 different proteins and 3 molecules of RNA (25S, 5.8S and 5S).

It localises to the cytoplasm. This chain is Small ribosomal subunit protein eS1A, found in Scheffersomyces stipitis (strain ATCC 58785 / CBS 6054 / NBRC 10063 / NRRL Y-11545) (Yeast).